A 92-amino-acid polypeptide reads, in one-letter code: Exodeoxyribonuclease 7 small subunit (92 aa).

Residues Met-1 to Thr-22 form a disordered region. Polar residues predominate over residues Ile-7–Glu-16.

The protein belongs to the XseB family. As to quaternary structure, heterooligomer composed of large and small subunits.

Its subcellular location is the cytoplasm. The catalysed reaction is Exonucleolytic cleavage in either 5'- to 3'- or 3'- to 5'-direction to yield nucleoside 5'-phosphates.. Its function is as follows. Bidirectionally degrades single-stranded DNA into large acid-insoluble oligonucleotides, which are then degraded further into small acid-soluble oligonucleotides. This is Exodeoxyribonuclease 7 small subunit from Photorhabdus laumondii subsp. laumondii (strain DSM 15139 / CIP 105565 / TT01) (Photorhabdus luminescens subsp. laumondii).